The primary structure comprises 327 residues: Short chain isoprenyl diphosphate synthase (327 aa).

The isopentenyl diphosphate site is built by lysine 48, arginine 51, and histidine 80. Mg(2+)-binding residues include aspartate 87 and aspartate 91. Arginine 96 contacts an all-trans-polyprenyl diphosphate. Residue arginine 97 participates in isopentenyl diphosphate binding. An all-trans-polyprenyl diphosphate-binding residues include lysine 176, threonine 177, glutamine 214, lysine 231, and lysine 241.

The protein belongs to the FPP/GGPP synthase family. In terms of assembly, homodimer. It depends on Mg(2+) as a cofactor.

It localises to the cytoplasm. This chain is Short chain isoprenyl diphosphate synthase (idsA), found in Methanocaldococcus jannaschii (strain ATCC 43067 / DSM 2661 / JAL-1 / JCM 10045 / NBRC 100440) (Methanococcus jannaschii).